A 151-amino-acid polypeptide reads, in one-letter code: Exosporium protein B (151 aa).

The protein localises to the spore wall. The polypeptide is Exosporium protein B (Clostridium sporogenes (strain ATCC 15579)).